Consider the following 138-residue polypeptide: Ribosome-binding factor A (138 aa).

The protein belongs to the RbfA family. Monomer. Binds 30S ribosomal subunits, but not 50S ribosomal subunits or 70S ribosomes.

The protein resides in the cytoplasm. One of several proteins that assist in the late maturation steps of the functional core of the 30S ribosomal subunit. Associates with free 30S ribosomal subunits (but not with 30S subunits that are part of 70S ribosomes or polysomes). Required for efficient processing of 16S rRNA. May interact with the 5'-terminal helix region of 16S rRNA. This chain is Ribosome-binding factor A, found in Sodalis glossinidius (strain morsitans).